A 215-amino-acid polypeptide reads, in one-letter code: Rac-like GTP-binding protein ARAC10 (215 aa).

Residue 15–22 coordinates GTP; sequence GDGAVGKT. The Effector region signature appears at 37-45; sequence YIPTVFDNF. GTP contacts are provided by residues 62 to 66 and 120 to 123; these read DTAGQ and TKLD. Residues Cys202 and Cys208 are each lipidated (S-palmitoyl cysteine).

This sequence belongs to the small GTPase superfamily. Rho family. Component of the active ARAC10-IRC5-KIN13A complex. Interacts with ICR5.

The protein resides in the membrane. It is found in the cytoplasm. Its subcellular location is the cytoskeleton. Involved in local disassembly of cortical microtubules when associated with ICR5 and KIN13A. The protein is Rac-like GTP-binding protein ARAC10 (ARAC10) of Arabidopsis thaliana (Mouse-ear cress).